A 574-amino-acid polypeptide reads, in one-letter code: DNA mismatch repair protein MutL (574 aa).

This sequence belongs to the DNA mismatch repair MutL/HexB family.

Functionally, this protein is involved in the repair of mismatches in DNA. It is required for dam-dependent methyl-directed DNA mismatch repair. May act as a 'molecular matchmaker', a protein that promotes the formation of a stable complex between two or more DNA-binding proteins in an ATP-dependent manner without itself being part of a final effector complex. The chain is DNA mismatch repair protein MutL from Coxiella burnetii (strain RSA 331 / Henzerling II).